The sequence spans 172 residues: NAD(P)H-quinone oxidoreductase subunit I, chloroplastic (172 aa).

2 consecutive 4Fe-4S ferredoxin-type domains span residues 55-84 (GRIHFEFDKCIACEVCVRVCPIDLPVVDWK) and 95-124 (LNYSIDFGICIFCGNCVEYCPTNCLSMTEE). [4Fe-4S] cluster is bound by residues cysteine 64, cysteine 67, cysteine 70, cysteine 74, cysteine 104, cysteine 107, cysteine 110, and cysteine 114.

Belongs to the complex I 23 kDa subunit family. In terms of assembly, NDH is composed of at least 16 different subunits, 5 of which are encoded in the nucleus. [4Fe-4S] cluster serves as cofactor.

The protein localises to the plastid. It localises to the chloroplast thylakoid membrane. The enzyme catalyses a plastoquinone + NADH + (n+1) H(+)(in) = a plastoquinol + NAD(+) + n H(+)(out). It carries out the reaction a plastoquinone + NADPH + (n+1) H(+)(in) = a plastoquinol + NADP(+) + n H(+)(out). Its function is as follows. NDH shuttles electrons from NAD(P)H:plastoquinone, via FMN and iron-sulfur (Fe-S) centers, to quinones in the photosynthetic chain and possibly in a chloroplast respiratory chain. The immediate electron acceptor for the enzyme in this species is believed to be plastoquinone. Couples the redox reaction to proton translocation, and thus conserves the redox energy in a proton gradient. This Capsella bursa-pastoris (Shepherd's purse) protein is NAD(P)H-quinone oxidoreductase subunit I, chloroplastic.